The chain runs to 388 residues: WD repeat-containing protein 55 (388 aa).

The segment covering 1–20 has biased composition (acidic residues); that stretch reads MDPTCEESPAEDSNNEEEDL. The segment at 1–33 is disordered; it reads MDPTCEESPAEDSNNEEEDLDSTKAAPRIRDTP. 7 WD repeats span residues 37 to 76, 83 to 122, 126 to 164, 167 to 206, 209 to 248, 251 to 290, and 293 to 333; these read VLEAPASGLAFHPTRDLLAAGDVDGDVFVFAYSCQEGETK, HHLKSCRAVVFSEDGQKLVTVSKDKAIHILDVEQGQLERR, AHSAPINSVLLVDENALVTGDDTGGIRLWDQRKEGPLMD, QHEEYIADMALDPAKKLLLTASGDGCLGVFNIKRRRFELL, PQSGDLTSVALMKYGKKVACGSSEGTIYLFNWNGFGATSD, ALRAESIDCIVPVTENLLCTGSTDGIIRAVNILPNRVVGT, and QHAG…TVVV. Ser-355 is subject to Phosphoserine. The disordered stretch occupies residues 364-388; it reads REDEEDAKAPEEVVRESDDDDDDSD. Residues 370 to 379 show a composition bias toward basic and acidic residues; that stretch reads AKAPEEVVRE.

This sequence belongs to the WD repeat WDR55 family.

The protein resides in the nucleus. It localises to the nucleolus. The protein localises to the cytoplasm. Nucleolar protein that acts as a modulator of rRNA synthesis. Plays a central role during organogenesis. The polypeptide is WD repeat-containing protein 55 (Wdr55) (Mus musculus (Mouse)).